Consider the following 438-residue polypeptide: 3-phosphoshikimate 1-carboxyvinyltransferase (438 aa).

3 residues coordinate 3-phosphoshikimate: lysine 21, serine 22, and arginine 26. Lysine 21 contacts phosphoenolpyruvate. Positions 95 and 123 each coordinate phosphoenolpyruvate. The 3-phosphoshikimate site is built by serine 167, glutamine 169, aspartate 315, and lysine 342. Glutamine 169 is a phosphoenolpyruvate binding site. Aspartate 315 acts as the Proton acceptor in catalysis. Positions 346 and 387 each coordinate phosphoenolpyruvate.

The protein belongs to the EPSP synthase family. In terms of assembly, monomer.

The protein localises to the cytoplasm. It catalyses the reaction 3-phosphoshikimate + phosphoenolpyruvate = 5-O-(1-carboxyvinyl)-3-phosphoshikimate + phosphate. The protein operates within metabolic intermediate biosynthesis; chorismate biosynthesis; chorismate from D-erythrose 4-phosphate and phosphoenolpyruvate: step 6/7. In terms of biological role, catalyzes the transfer of the enolpyruvyl moiety of phosphoenolpyruvate (PEP) to the 5-hydroxyl of shikimate-3-phosphate (S3P) to produce enolpyruvyl shikimate-3-phosphate and inorganic phosphate. The protein is 3-phosphoshikimate 1-carboxyvinyltransferase of Coxiella burnetii (strain CbuG_Q212) (Coxiella burnetii (strain Q212)).